The sequence spans 88 residues: MASIVPLKEKKLMEVKLRELPSWILMRDFTPSGIAGAFRRGYDRYYNKYINVRKGSISGINMVLAAYVVFSYCISYKELKHERRRKYH.

Position 2 is an N-acetylalanine (alanine 2). Serine 3 is modified (phosphoserine). At lysine 16 the chain carries N6-acetyllysine. A helical transmembrane segment spans residues 62 to 79 (MVLAAYVVFSYCISYKEL).

The protein belongs to the ATPase F chain family. In terms of assembly, component of the ATP synthase complex composed at least of ATP5F1A/subunit alpha, ATP5F1B/subunit beta, ATP5MC1/subunit c (homooctomer), MT-ATP6/subunit a, MT-ATP8/subunit 8, ATP5ME/subunit e, ATP5MF/subunit f, ATP5MG/subunit g, ATP5MK/subunit k, ATP5MJ/subunit j, ATP5F1C/subunit gamma, ATP5F1D/subunit delta, ATP5F1E/subunit epsilon, ATP5PF/subunit F6, ATP5PB/subunit b, ATP5PD/subunit d, ATP5PO/subunit OSCP. ATP synthase complex consists of a soluble F(1) head domain (subunits alpha(3) and beta(3)) - the catalytic core - and a membrane F(0) domain - the membrane proton channel (subunits c, a, 8, e, f, g, k and j). These two domains are linked by a central stalk (subunits gamma, delta, and epsilon) rotating inside the F1 region and a stationary peripheral stalk (subunits F6, b, d, and OSCP).

It localises to the mitochondrion. The protein localises to the mitochondrion inner membrane. In terms of biological role, subunit f, of the mitochondrial membrane ATP synthase complex (F(1)F(0) ATP synthase or Complex V) that produces ATP from ADP in the presence of a proton gradient across the membrane which is generated by electron transport complexes of the respiratory chain. ATP synthase complex consist of a soluble F(1) head domain - the catalytic core - and a membrane F(1) domain - the membrane proton channel. These two domains are linked by a central stalk rotating inside the F(1) region and a stationary peripheral stalk. During catalysis, ATP synthesis in the catalytic domain of F(1) is coupled via a rotary mechanism of the central stalk subunits to proton translocation. In vivo, can only synthesize ATP although its ATP hydrolase activity can be activated artificially in vitro. Part of the complex F(0) domain. The sequence is that of ATP synthase F(0) complex subunit f, mitochondrial from Rattus norvegicus (Rat).